Reading from the N-terminus, the 239-residue chain is Carboxy-S-adenosyl-L-methionine synthase (239 aa).

Residues Tyr-35, Gly-64–Ser-66, Asp-114–Leu-115, Asn-129, and Arg-196 each bind S-adenosyl-L-methionine.

The protein belongs to the class I-like SAM-binding methyltransferase superfamily. Cx-SAM synthase family. As to quaternary structure, homodimer.

The enzyme catalyses prephenate + S-adenosyl-L-methionine = carboxy-S-adenosyl-L-methionine + 3-phenylpyruvate + H2O. Catalyzes the conversion of S-adenosyl-L-methionine (SAM) to carboxy-S-adenosyl-L-methionine (Cx-SAM). This Helicobacter hepaticus (strain ATCC 51449 / 3B1) protein is Carboxy-S-adenosyl-L-methionine synthase.